Consider the following 135-residue polypeptide: Transcriptional regulator HosA (135 aa).

Residues 4–134 (RNKAFHQLRQ…FVQLVRKMMN (131 aa)) enclose the HTH marR-type domain. The H-T-H motif DNA-binding region spans 48–71 (QVALIEAAVSTKATLAEMLARMEN).

In terms of biological role, involved in the temperature-dependent positive control of flagellum-driven swimming motility and cellular aggregation. Regulates fliC expression by directly interacting with fliC promoter. The chain is Transcriptional regulator HosA (hosA) from Escherichia coli O157:H7.